The chain runs to 1245 residues: Structural polyprotein (1245 aa).

A disordered region spans residues 1–106 (MNRGFFNMLG…KPKPGKRQRM (106 aa)). A host transcription inhibition region spans residues 37–70 (GLASQIQQLTTAVSALVIGQATRPQPPRPRPPPR). Positions 38–49 (LASQIQQLTTAV) are enriched in polar residues. The Nuclear localization signal motif lies at 63–100 (PRPRPPPRQKKQAPKQPPKPKKPKTQEKKKKQPAKPKP). The segment covering 67 to 106 (PPPRQKKQAPKQPPKPKKPKTQEKKKKQPAKPKPGKRQRM) has biased composition (basic residues). The interval 86-115 (KTQEKKKKQPAKPKPGKRQRMALKLEADRL) is binding to the viral RNA. Residues 100–114 (PGKRQRMALKLEADR) are ribosome-binding. One can recognise a Peptidase S3 domain in the interval 114 to 264 (RLFDVKNEDG…KTTPEGTEEW (151 aa)). Catalysis depends on His141, which acts as the Charge relay system. The Nuclear export signal motif lies at 146 to 156 (IDHPVLSKLKF). Positions 157–162 (TKSSAY) are interaction with spike glycoprotein E2. Residue Asp163 is the Charge relay system of the active site. The dimerization of the capsid protein stretch occupies residues 185-195 (PEGFYNWHHGA). Residue Ser215 is the Charge relay system of the active site. The interval 221-225 (DNSGR) is dimerization of the capsid protein. An interaction with spike glycoprotein E2 region spans residues 249–253 (SKGKT). The segment at 265 to 279 (SAAPLVTAMCLLGNV) is functions as an uncleaved signal peptide for the precursor of protein E3/E2. Asn278 is a glycosylation site (N-linked (GlcNAc...) asparagine; by host). 4 disulfide bridges follow: Cys283-Cys289, Cys480-Cys594, Cys529-Cys554, and Cys531-Cys548. Residues 329–690 (SVIDDFTLTS…HEIVQHYYHR (362 aa)) lie on the Extracellular side of the membrane. Residue Asn524 is glycosylated (N-linked (GlcNAc...) asparagine; by host). Asn646 carries N-linked (GlcNAc...) asparagine; by host glycosylation. The stretch at 682–730 (EIVQHYYHRHPVYTILAVASATVAMMIGVTVAVLCACKARRECLTPYAL) forms a coiled coil. Residues 691–718 (HPVYTILAVASATVAMMIGVTVAVLCAC) form a helical membrane-spanning segment. Residues 719–723 (KARRE) form an interaction with the capsid protein region. The Cytoplasmic portion of the chain corresponds to 719–751 (KARRECLTPYALAPNAVIPTSLALLCCVRSANA). 3 S-palmitoyl cysteine; by host lipidation sites follow: Cys724, Cys744, and Cys745. A disulfide bond links Cys724 and Cys745. The Extracellular segment spans residues 752 to 763 (ETFTETMSYLWS). Residues 764–784 (NSQPFFWVQLCIPLAAFIVLM) form a helical membrane-spanning segment. Arg785 is a topological domain (cytoplasmic). A helical membrane pass occupies residues 786–806 (CCSCCLPFLVVAGAYLAKVDA). Residues 807 to 1214 (YEHATTVPNV…QAAISKTSWS (408 aa)) lie on the Extracellular side of the membrane. Cystine bridges form between Cys855-Cys920, Cys868-Cys900, Cys869-Cys902, and Cys874-Cys884. Residues 890–907 (VYPFMWGGAQCFCDSENS) are E1 fusion peptide loop. 2 N-linked (GlcNAc...) asparagine; by host glycosylation sites follow: Asn945 and Asn1051. 4 cysteine pairs are disulfide-bonded: Cys1065–Cys1077, Cys1107–Cys1182, Cys1112–Cys1186, and Cys1134–Cys1176. Residues 1196–1245 (TPHKNDQEFQAAISKTSWSWLFALFGGASSLLIIGLMIFACSMMLTSTRR) are a coiled coil. Residues 1215 to 1239 (WLFALFGGASSLLIIGLMIFACSMM) traverse the membrane as a helical segment. At 1240–1245 (LTSTRR) the chain is on the cytoplasmic side.

Belongs to the alphavirus structural polyprotein family. In terms of assembly, homomultimer. Interacts with host karyopherin KPNA4; this interaction allows the nuclear import of the viral capsid protein. Interacts with spike glycoprotein E2. Interacts with host IRAK1; the interaction leads to inhibition of IRAK1-dependent signaling. As to quaternary structure, the precursor of protein E3/E2 and E1 form a heterodimer shortly after synthesis. The precursor of protein E3/E2 and E1 form a heterodimer shortly after synthesis. Processing of the precursor of protein E3/E2 into E2 and E3 results in a heterodimer of the spike glycoproteins E2 and E1. Spike at virion surface are constituted of a trimer of E2-E1 heterodimers. After target cell attachment and endocytosis, E1 change conformation to form homotrimers. E2-E1 heterodimers interact with host VLDLR or LRP8/APOER2 to mediate viral entry. Interacts with 6K protein. In terms of assembly, interacts with spike glycoprotein E1. Processing of the precursor of protein E3/E2 into E2 and E3 results in a heterodimer of the spike glycoproteins E2 and E1. Spike at virion surface are constituted of a trimer of E2-E1 heterodimers. E2-E1 heterodimers interact with host VLDLR or LRP8/APOER2 to mediate viral entry. Interacts with 6K protein. Interacts with the capsid protein. As to quaternary structure, oligomer. Interacts with spike glycoprotein E1. Interacts with spike glycoprotein E2. In terms of processing, specific enzymatic cleavages in vivo yield mature proteins. Capsid protein is auto-cleaved during polyprotein translation, unmasking a signal peptide at the N-terminus of the precursor of E3/E2. The remaining polyprotein is then targeted to the host endoplasmic reticulum, where host signal peptidase cleaves it into pE2, 6K and E1 proteins. pE2 is further processed to mature E3 and E2 by host furin in trans-Golgi vesicle. Post-translationally, palmitoylated via thioester bonds. These palmitoylations may induce disruption of the C-terminus transmembrane. This would result in the reorientation of E2 C-terminus from lumenal to cytoplasmic side. N-glycosylated. In terms of processing, palmitoylated via thioester bonds.

Its subcellular location is the virion. The protein resides in the host cytoplasm. It localises to the host cell membrane. It is found in the host nucleus. The protein localises to the virion membrane. Its subcellular location is the host Golgi apparatus. The protein resides in the host trans-Golgi network. It localises to the host endoplasmic reticulum. The catalysed reaction is Autocatalytic release of the core protein from the N-terminus of the togavirus structural polyprotein by hydrolysis of a -Trp-|-Ser- bond.. The channel activity is blocked by 5-N, N-Hexamethylene amiloride. In terms of biological role, forms an icosahedral capsid with a T=4 symmetry composed of 240 copies of the capsid protein surrounded by a lipid membrane through which penetrate 80 spikes composed of trimers of E1-E2 heterodimers. The capsid protein binds to the viral RNA genome at a site adjacent to a ribosome binding site for viral genome translation following genome release. Possesses a protease activity that results in its autocatalytic cleavage from the nascent structural protein. Following its self-cleavage, the capsid protein transiently associates with ribosomes, and within several minutes the protein binds to viral RNA and rapidly assembles into icosahedric core particles. The resulting nucleocapsid eventually associates with the cytoplasmic domain of the spike glycoprotein E2 at the cell membrane, leading to budding and formation of mature virions. In case of infection, new virions attach to target cells and after clathrin-mediated endocytosis their membrane fuses with the host endosomal membrane. This leads to the release of the nucleocapsid into the cytoplasm, followed by an uncoating event necessary for the genomic RNA to become accessible. The uncoating might be triggered by the interaction of capsid proteins with ribosomes. Binding of ribosomes would release the genomic RNA since the same region is genomic RNA-binding and ribosome-binding. Specifically inhibits interleukin-1 receptor-associated kinase 1/IRAK1-dependent signaling during viral entry, representing a means by which the alphaviruses may evade innate immune detection and activation prior to viral gene expression. Its function is as follows. Provides the signal sequence for the translocation of the precursor of protein E3/E2 to the host endoplasmic reticulum. Furin-cleaved E3 remains associated with spike glycoprotein E1 and mediates pH protection of the latter during the transport via the secretory pathway. After virion release from the host cell, the assembly protein E3 is gradually released in the extracellular space. Functionally, plays a role in viral attachment to target host cell, by binding to the cell receptors VLDLR or LRP8/APOER2. Synthesized as a pE2 precursor which is processed by furin at the cell membrane just before virion budding, giving rise to E2-E1 heterodimer. The pE2-E1 heterodimer is stable, whereas E2-E1 is unstable and dissociate at low pH. pE2 is processed at the last step, presumably to avoid E1 fusion activation before its final export to cell surface. E2 C-terminus contains a transitory transmembrane that would be disrupted by palmitoylation, resulting in reorientation of the C-terminal tail from lumenal to cytoplasmic side. This step is critical since E2 C-terminus is involved in budding by interacting with capsid proteins. This release of E2 C-terminus in cytoplasm occurs lately in protein export, and precludes premature assembly of particles at the endoplasmic reticulum membrane. Acts as a viroporin that participates in virus glycoprotein processing and transport to the plasma membrane, cell permeabilization and budding of viral particles. Disrupts the calcium homeostasis of the cell, probably at the endoplasmic reticulum level resulting in the increased levels of cytoplasmic calcium. Because of its lipophilic properties, the 6K protein is postulated to influence the selection of lipids that interact with the transmembrane domains of the glycoproteins, which, in turn, affects the deformability of the bilayer required for the extreme curvature that occurs as budding proceeds. Present in low amount in virions, about 3% compared to viral glycoproteins. In terms of biological role, class II viral fusion protein. Fusion activity is inactive as long as E1 is bound to E2 in mature virion. After virus attachment to target cell via host VLDLR or LRP8/APOER2 and endocytosis, acidification of the endosome induces dissociation of E1/E2 heterodimer and concomitant trimerization of the E1 subunits. This E1 trimer is fusion active, and promotes release of viral nucleocapsid in cytoplasm after endosome and viral membrane fusion. Efficient fusion requires the presence of cholesterol and sphingolipid in the target membrane. In Acrocephalus scirpaceus (Eurasian reed-warbler), this protein is Structural polyprotein.